Consider the following 199-residue polypeptide: Phosphoheptose isomerase (199 aa).

An SIS domain is found at M36 to D198. N51 to G53 provides a ligand contact to substrate. Zn(2+) contacts are provided by H60 and E64. Residues E64, N93–D94, S119–S121, S124, and Q174 each bind substrate. The Zn(2+) site is built by Q174 and H182.

The protein belongs to the SIS family. GmhA subfamily. In terms of assembly, homotetramer. Zn(2+) is required as a cofactor.

Its subcellular location is the cytoplasm. The enzyme catalyses 2 D-sedoheptulose 7-phosphate = D-glycero-alpha-D-manno-heptose 7-phosphate + D-glycero-beta-D-manno-heptose 7-phosphate. It functions in the pathway carbohydrate biosynthesis; D-glycero-D-manno-heptose 7-phosphate biosynthesis; D-glycero-alpha-D-manno-heptose 7-phosphate and D-glycero-beta-D-manno-heptose 7-phosphate from sedoheptulose 7-phosphate: step 1/1. Functionally, catalyzes the isomerization of sedoheptulose 7-phosphate in D-glycero-D-manno-heptose 7-phosphate. The sequence is that of Phosphoheptose isomerase from Coxiella burnetii (strain RSA 331 / Henzerling II).